A 201-amino-acid polypeptide reads, in one-letter code: dITP/XTP pyrophosphatase (201 aa).

Position 7–12 (7–12 (SNNAHK)) interacts with substrate. Asp-72 functions as the Proton acceptor in the catalytic mechanism. Asp-72 contacts Mg(2+). Residues Ser-73, 154–157 (FGYD), Lys-177, and 182–183 (HR) contribute to the substrate site.

Belongs to the HAM1 NTPase family. In terms of assembly, homodimer. Mg(2+) serves as cofactor.

It carries out the reaction XTP + H2O = XMP + diphosphate + H(+). The catalysed reaction is dITP + H2O = dIMP + diphosphate + H(+). The enzyme catalyses ITP + H2O = IMP + diphosphate + H(+). Pyrophosphatase that catalyzes the hydrolysis of nucleoside triphosphates to their monophosphate derivatives, with a high preference for the non-canonical purine nucleotides XTP (xanthosine triphosphate), dITP (deoxyinosine triphosphate) and ITP. Seems to function as a house-cleaning enzyme that removes non-canonical purine nucleotides from the nucleotide pool, thus preventing their incorporation into DNA/RNA and avoiding chromosomal lesions. This Leuconostoc mesenteroides subsp. mesenteroides (strain ATCC 8293 / DSM 20343 / BCRC 11652 / CCM 1803 / JCM 6124 / NCDO 523 / NBRC 100496 / NCIMB 8023 / NCTC 12954 / NRRL B-1118 / 37Y) protein is dITP/XTP pyrophosphatase.